The primary structure comprises 119 residues: Large ribosomal subunit protein bL20 (119 aa).

The protein belongs to the bacterial ribosomal protein bL20 family.

Functionally, binds directly to 23S ribosomal RNA and is necessary for the in vitro assembly process of the 50S ribosomal subunit. It is not involved in the protein synthesizing functions of that subunit. The sequence is that of Large ribosomal subunit protein bL20 from Erythrobacter litoralis (strain HTCC2594).